The primary structure comprises 205 residues: Putative 3-methyladenine DNA glycosylase (205 aa).

It belongs to the DNA glycosylase MPG family.

The polypeptide is Putative 3-methyladenine DNA glycosylase (Bacillus thuringiensis (strain Al Hakam)).